A 311-amino-acid chain; its full sequence is MDNLTKVTEFLLMEFSGIWELQVLHAGLFLLIYLAVLVGNLLIIAVITLDQHLHTPMYFFLKNLSVLDLCYISVTVPKSIRNSLTRRSSISYLGCVAQVYFFSAFASAELAFLTVMSYDRYVAICHPLQYRAVMTSGGCYQMAVTTWLSCFSYAAVHTGNMFREHVCRSSVIHQFFRDIPHVLALVSCEVFFVEFLTLALSSCLVLGCFILMMISYFQIFSTVLRIPSGQSRAKAFSTCSPQLIVIMLFLTTGLFAALGPIAKALSIQDLVIALTYTVLPPFLNPIIYSLRNKEIKTAMWRLFVKIYFLQK.

Over 1 to 26 (MDNLTKVTEFLLMEFSGIWELQVLHA) the chain is Extracellular. An N-linked (GlcNAc...) asparagine glycan is attached at Asn3. The chain crosses the membrane as a helical span at residues 27-47 (GLFLLIYLAVLVGNLLIIAVI). The Cytoplasmic portion of the chain corresponds to 48–55 (TLDQHLHT). Residues 56 to 76 (PMYFFLKNLSVLDLCYISVTV) traverse the membrane as a helical segment. At 77–92 (PKSIRNSLTRRSSISY) the chain is on the extracellular side. Residues 93 to 113 (LGCVAQVYFFSAFASAELAFL) form a helical membrane-spanning segment. A disulfide bond links Cys95 and Cys188. Topologically, residues 114–141 (TVMSYDRYVAICHPLQYRAVMTSGGCYQ) are cytoplasmic. A helical membrane pass occupies residues 142–162 (MAVTTWLSCFSYAAVHTGNMF). Over 163-189 (REHVCRSSVIHQFFRDIPHVLALVSCE) the chain is Extracellular. Residues 190–210 (VFFVEFLTLALSSCLVLGCFI) form a helical membrane-spanning segment. Residues 211–241 (LMMISYFQIFSTVLRIPSGQSRAKAFSTCSP) lie on the Cytoplasmic side of the membrane. Residues 242–262 (QLIVIMLFLTTGLFAALGPIA) traverse the membrane as a helical segment. The Extracellular segment spans residues 263-269 (KALSIQD). Residues 270–290 (LVIALTYTVLPPFLNPIIYSL) traverse the membrane as a helical segment. Residues 291–311 (RNKEIKTAMWRLFVKIYFLQK) lie on the Cytoplasmic side of the membrane.

This sequence belongs to the G-protein coupled receptor 1 family.

It localises to the cell membrane. Odorant receptor. This Homo sapiens (Human) protein is Olfactory receptor 14I1 (OR14I1).